A 264-amino-acid polypeptide reads, in one-letter code: PDZ domain-containing protein 9 (264 aa).

The region spanning 22–109 is the PDZ domain; sequence VHNLSKTQQT…GTVLQIKVYR (88 aa).

The polypeptide is PDZ domain-containing protein 9 (PDZD9) (Macaca fascicularis (Crab-eating macaque)).